A 313-amino-acid polypeptide reads, in one-letter code: MVVTEYELKPQNFPRFPLDWSEIFGRKAKIVVEIGFGNGEFLAELARRHPEKDFVGFEVSITSFVKAQKKFKRYNLKNVRLVKVDARFGLRELFPDNSVEKVYINFPCPWPKKRHESRRITSYDFLQTLSAVLEMDGTVEFATDEEWYAREVLDTFESSEYFVVDVFEENFKRDVETRYERKWKSQGKKTFLIVARKVKNGTVKRLMEGENTMAHSVFEGNVTWEKLKELEGKVFKDKNKIFVVKKVYRDGDYLLKVISTDEGGFQQVYYLNLSGRDGKWVLKLDEGSDPYRTPALKWSLRRIPEELTAQGSP.

S-adenosyl-L-methionine contacts are provided by glutamate 33, glutamate 58, and aspartate 85. Substrate contacts are provided by residues lysine 112, aspartate 144, and 177–180 (TRYE).

Belongs to the class I-like SAM-binding methyltransferase superfamily. TrmB family.

The catalysed reaction is guanosine(46) in tRNA + S-adenosyl-L-methionine = N(7)-methylguanosine(46) in tRNA + S-adenosyl-L-homocysteine. Its pathway is tRNA modification; N(7)-methylguanine-tRNA biosynthesis. In terms of biological role, catalyzes the formation of N(7)-methylguanine at position 46 (m7G46) in tRNA. The polypeptide is tRNA (guanine-N(7)-)-methyltransferase (Thermotoga maritima (strain ATCC 43589 / DSM 3109 / JCM 10099 / NBRC 100826 / MSB8)).